The primary structure comprises 253 residues: Type III pantothenate kinase (253 aa).

An ATP-binding site is contributed by 6–13 (DVGNTNIV). Position 107-110 (107-110 (GADR)) interacts with substrate. Aspartate 109 functions as the Proton acceptor in the catalytic mechanism. Aspartate 129 lines the K(+) pocket. Residue threonine 132 coordinates ATP. Position 184 (threonine 184) interacts with substrate.

Belongs to the type III pantothenate kinase family. As to quaternary structure, homodimer. NH4(+) serves as cofactor. Requires K(+) as cofactor.

Its subcellular location is the cytoplasm. It catalyses the reaction (R)-pantothenate + ATP = (R)-4'-phosphopantothenate + ADP + H(+). Its pathway is cofactor biosynthesis; coenzyme A biosynthesis; CoA from (R)-pantothenate: step 1/5. Catalyzes the phosphorylation of pantothenate (Pan), the first step in CoA biosynthesis. The sequence is that of Type III pantothenate kinase from Exiguobacterium sibiricum (strain DSM 17290 / CCUG 55495 / CIP 109462 / JCM 13490 / 255-15).